The sequence spans 263 residues: Thiazole synthase (263 aa).

The Schiff-base intermediate with DXP role is filled by Lys-102. Residues Gly-164, 190 to 191 (AG), and 212 to 213 (NT) contribute to the 1-deoxy-D-xylulose 5-phosphate site.

It belongs to the ThiG family. Homotetramer. Forms heterodimers with either ThiH or ThiS.

The protein localises to the cytoplasm. The enzyme catalyses [ThiS sulfur-carrier protein]-C-terminal-Gly-aminoethanethioate + 2-iminoacetate + 1-deoxy-D-xylulose 5-phosphate = [ThiS sulfur-carrier protein]-C-terminal Gly-Gly + 2-[(2R,5Z)-2-carboxy-4-methylthiazol-5(2H)-ylidene]ethyl phosphate + 2 H2O + H(+). It functions in the pathway cofactor biosynthesis; thiamine diphosphate biosynthesis. In terms of biological role, catalyzes the rearrangement of 1-deoxy-D-xylulose 5-phosphate (DXP) to produce the thiazole phosphate moiety of thiamine. Sulfur is provided by the thiocarboxylate moiety of the carrier protein ThiS. In vitro, sulfur can be provided by H(2)S. This chain is Thiazole synthase, found in Helicobacter hepaticus (strain ATCC 51449 / 3B1).